Reading from the N-terminus, the 482-residue chain is NADH-quinone oxidoreductase subunit D (482 aa).

Residues 1–16 (MTTNTSTSSTTDDLTT) are compositionally biased toward low complexity. The segment at 1–48 (MTTNTSTSSTTDDLTTGAPNGTGAPDGANGVGGPTGTVGGPGEHPAYE) is disordered. Residues 29 to 42 (NGVGGPTGTVGGPG) are compositionally biased toward gly residues.

The protein belongs to the complex I 49 kDa subunit family. In terms of assembly, NDH-1 is composed of 14 different subunits. Subunits NuoB, C, D, E, F, and G constitute the peripheral sector of the complex.

The protein localises to the cell membrane. The catalysed reaction is a quinone + NADH + 5 H(+)(in) = a quinol + NAD(+) + 4 H(+)(out). Its function is as follows. NDH-1 shuttles electrons from NADH, via FMN and iron-sulfur (Fe-S) centers, to quinones in the respiratory chain. The immediate electron acceptor for the enzyme in this species is believed to be a menaquinone. Couples the redox reaction to proton translocation (for every two electrons transferred, four hydrogen ions are translocated across the cytoplasmic membrane), and thus conserves the redox energy in a proton gradient. The sequence is that of NADH-quinone oxidoreductase subunit D from Frankia casuarinae (strain DSM 45818 / CECT 9043 / HFP020203 / CcI3).